The sequence spans 396 residues: Elongation factor Tu (396 aa).

The tr-type G domain occupies Lys10–Glu206. Residues Gly19 to Thr26 form a G1 region. Gly19 to Thr26 lines the GTP pocket. Residue Thr26 participates in Mg(2+) binding. The tract at residues Gly60–Ser64 is G2. The tract at residues Asp81–Gly84 is G3. Residues Asp81–His85 and Asn136–Asp139 each bind GTP. The segment at Asn136–Asp139 is G4. The G5 stretch occupies residues Ser174–Leu176.

This sequence belongs to the TRAFAC class translation factor GTPase superfamily. Classic translation factor GTPase family. EF-Tu/EF-1A subfamily. Monomer.

The protein resides in the cytoplasm. It carries out the reaction GTP + H2O = GDP + phosphate + H(+). In terms of biological role, GTP hydrolase that promotes the GTP-dependent binding of aminoacyl-tRNA to the A-site of ribosomes during protein biosynthesis. This is Elongation factor Tu from Nitrobacter winogradskyi (strain ATCC 25391 / DSM 10237 / CIP 104748 / NCIMB 11846 / Nb-255).